A 552-amino-acid chain; its full sequence is MAAKDVIFGGEARARMVEGVNILANAVKVTLGPKGRNVVLDRSFGAPTVTKDGVSVAKEIELKDKLQNMGAQMVKEVASKTSDIAGDGTTTATVLAQAIVHEGMKYVTAGMNPMDLKRGIDKAVHALIVELKKASKATTTSKEIAQVGSISANSDEAIGKIIADAMDKVGKEGVITVEDGKSLDSELDVVEGMQFDRGYLSPYFINNPEKQAALLDNPFVLLYDKKISNIRDLLPTLEQVAKSGRPLLIISEDVEGEALATLVVNTIRGILKVVAVKAPGFGDRRKAMLEDIAILTGGKVIAEEVGMSLEKVTLADLGSAKRIEVGKENTIIIDGAGAAADIEARVKQVRVQIEEATSDYDREKLQERVAKLAGGVAVIKVGAATEVEMKEKKARVEDALHATRAAVEEGIVAGGGVALLRAKQAVGTLKGANADQDAGIKLVMKAIEAPLREIVYNAGGEASVVVNAVMAGKGNYGFNAANDTYGDMIEMGILDPTKVTRTALQNAASVASLMLTTECMVSESPKDDSAAGMGGMGGGDMGGMGGMGGMGM.

ATP-binding positions include 30–33 (TLGP), lysine 51, 87–91 (DGTTT), glycine 415, 479–481 (NAA), and aspartate 495.

This sequence belongs to the chaperonin (HSP60) family. Forms a cylinder of 14 subunits composed of two heptameric rings stacked back-to-back. Interacts with the co-chaperonin GroES.

It localises to the cytoplasm. The enzyme catalyses ATP + H2O + a folded polypeptide = ADP + phosphate + an unfolded polypeptide.. In terms of biological role, together with its co-chaperonin GroES, plays an essential role in assisting protein folding. The GroEL-GroES system forms a nano-cage that allows encapsulation of the non-native substrate proteins and provides a physical environment optimized to promote and accelerate protein folding. The polypeptide is Chaperonin GroEL 1 (Albidiferax ferrireducens (strain ATCC BAA-621 / DSM 15236 / T118) (Rhodoferax ferrireducens)).